The chain runs to 227 residues: Lipoprotein-releasing system ATP-binding protein LolD (227 aa).

The 221-residue stretch at 7–227 folds into the ABC transporter domain; sequence LRLERIGRAY…TLKDGRVVDL (221 aa). 43-50 is a binding site for ATP; it reads APSGAGKS.

It belongs to the ABC transporter superfamily. Lipoprotein translocase (TC 3.A.1.125) family. In terms of assembly, the complex is composed of two ATP-binding proteins (LolD) and two transmembrane proteins (LolC and LolE).

Its subcellular location is the cell inner membrane. Part of the ABC transporter complex LolCDE involved in the translocation of mature outer membrane-directed lipoproteins, from the inner membrane to the periplasmic chaperone, LolA. Responsible for the formation of the LolA-lipoprotein complex in an ATP-dependent manner. This Brucella abortus biovar 1 (strain 9-941) protein is Lipoprotein-releasing system ATP-binding protein LolD.